Reading from the N-terminus, the 199-residue chain is Holliday junction branch migration complex subunit RuvA (199 aa).

Residues 1-65 (MIGWLHGQII…EDALLLYGFL (65 aa)) are domain I. A domain II region spans residues 66 to 144 (DKEERSLFRS…QFDGSVSDTF (79 aa)). The interval 144–148 (FQKQA) is flexible linker. Residues 149 to 199 (GSTHSQQEAISALEALGYKPQEAWKVVNKIDNGNKSCEQLIREALQILSSR) are domain III.

It belongs to the RuvA family. Homotetramer. Forms an RuvA(8)-RuvB(12)-Holliday junction (HJ) complex. HJ DNA is sandwiched between 2 RuvA tetramers; dsDNA enters through RuvA and exits via RuvB. An RuvB hexamer assembles on each DNA strand where it exits the tetramer. Each RuvB hexamer is contacted by two RuvA subunits (via domain III) on 2 adjacent RuvB subunits; this complex drives branch migration. In the full resolvosome a probable DNA-RuvA(4)-RuvB(12)-RuvC(2) complex forms which resolves the HJ.

The protein localises to the cytoplasm. Its function is as follows. The RuvA-RuvB-RuvC complex processes Holliday junction (HJ) DNA during genetic recombination and DNA repair, while the RuvA-RuvB complex plays an important role in the rescue of blocked DNA replication forks via replication fork reversal (RFR). RuvA specifically binds to HJ cruciform DNA, conferring on it an open structure. The RuvB hexamer acts as an ATP-dependent pump, pulling dsDNA into and through the RuvAB complex. HJ branch migration allows RuvC to scan DNA until it finds its consensus sequence, where it cleaves and resolves the cruciform DNA. The polypeptide is Holliday junction branch migration complex subunit RuvA (Legionella pneumophila (strain Paris)).